Consider the following 128-residue polypeptide: MVWSSNMSSFLLILLILNSTHFSLMANGRPEPDSVEFTKSGDQDVKMMMRGLIGSRPPRCERVRCRSCGHCEAIQVPTNPQTKLHSPLTTSSSSSSETIHLDYTRGDDSTNYKPMSWKCKCGNSIYNP.

An N-terminal signal peptide occupies residues methionine 1–glycine 28. Intrachain disulfides connect cysteine 60–cysteine 119, cysteine 65–cysteine 71, and cysteine 68–cysteine 121. The span at asparagine 79–threonine 90 shows a compositional bias: polar residues. Positions asparagine 79–histidine 100 are disordered.

Belongs to the plant cysteine rich small secretory peptide family. Epidermal patterning factor subfamily.

The protein localises to the secreted. In terms of biological role, controls stomatal patterning. The sequence is that of EPIDERMAL PATTERNING FACTOR-like protein 2 from Arabidopsis thaliana (Mouse-ear cress).